The primary structure comprises 118 residues: V-type proton ATPase subunit G 1 (118 aa).

Residue alanine 2 is modified to N-acetylalanine. The interval 25–90 (ARKRKARRLK…VQGMQSSQQR (66 aa)) is disordered. Positions 35–56 (QAKEEAQMEVEQYRREREHEFQ) are enriched in basic and acidic residues. Polar residues-rich tracts occupy residues 57-69 (SKQQ…QGNL) and 78-89 (RHQVQGMQSSQQ).

It belongs to the V-ATPase G subunit family. As to quaternary structure, V-ATPase is a heteromultimeric enzyme made up of two complexes: the ATP-hydrolytic V1 complex and the proton translocation V0 complex. The V1 complex consists of three catalytic AB heterodimers that form a heterohexamer, three peripheral stalks each consisting of EG heterodimers, one central rotor including subunits D and F, and the regulatory subunits C and H. The proton translocation complex V0 consists of the proton transport subunit a, a ring of proteolipid subunits c9c'', rotary subunit d, subunits e and f, and the accessory subunits ATP6AP1/Ac45 and ATP6AP2/PRR.

It localises to the apical cell membrane. Subunit of the V1 complex of vacuolar(H+)-ATPase (V-ATPase), a multisubunit enzyme composed of a peripheral complex (V1) that hydrolyzes ATP and a membrane integral complex (V0) that translocates protons. V-ATPase is responsible for acidifying and maintaining the pH of intracellular compartments and in some cell types, is targeted to the plasma membrane, where it is responsible for acidifying the extracellular environment. In aerobic conditions, involved in intracellular iron homeostasis, thus triggering the activity of Fe(2+) prolyl hydroxylase (PHD) enzymes, and leading to HIF1A hydroxylation and subsequent proteasomal degradation. The chain is V-type proton ATPase subunit G 1 (ATP6V1G1) from Pan troglodytes (Chimpanzee).